The primary structure comprises 76 residues: UPF0248 protein MmarC6_0667 (76 aa).

It belongs to the UPF0248 family.

The polypeptide is UPF0248 protein MmarC6_0667 (Methanococcus maripaludis (strain C6 / ATCC BAA-1332)).